A 229-amino-acid polypeptide reads, in one-letter code: Potassium/proton antiporter CemA (229 aa).

Helical transmembrane passes span 11–31, 118–138, 158–178, and 190–210; these read TTPF…SLFF, IISF…LVIL, LLAL…ELLI, and LLVC…TFNY.

Belongs to the CemA family.

Its subcellular location is the plastid. The protein localises to the chloroplast inner membrane. It catalyses the reaction K(+)(in) + H(+)(out) = K(+)(out) + H(+)(in). Its function is as follows. Contributes to K(+)/H(+) antiport activity by supporting proton efflux to control proton extrusion and homeostasis in chloroplasts in a light-dependent manner to modulate photosynthesis. Prevents excessive induction of non-photochemical quenching (NPQ) under continuous-light conditions. Indirectly promotes efficient inorganic carbon uptake into chloroplasts. This is Potassium/proton antiporter CemA from Pelargonium hortorum (Common geranium).